The chain runs to 738 residues: 1,4-alpha-glucan branching enzyme GlgB (738 aa).

The active-site Nucleophile is Asp399. Residue Glu452 is the Proton donor of the active site.

This sequence belongs to the glycosyl hydrolase 13 family. GlgB subfamily. As to quaternary structure, monomer.

It catalyses the reaction Transfers a segment of a (1-&gt;4)-alpha-D-glucan chain to a primary hydroxy group in a similar glucan chain.. Its pathway is glycan biosynthesis; glycogen biosynthesis. Functionally, catalyzes the formation of the alpha-1,6-glucosidic linkages in glycogen by scission of a 1,4-alpha-linked oligosaccharide from growing alpha-1,4-glucan chains and the subsequent attachment of the oligosaccharide to the alpha-1,6 position. In Chlamydia trachomatis serovar A (strain ATCC VR-571B / DSM 19440 / HAR-13), this protein is 1,4-alpha-glucan branching enzyme GlgB.